Consider the following 470-residue polypeptide: Metalloreductase STEAP4 (470 aa).

Residues 27 to 30, 49 to 50, Y67, 81 to 85, N106, and A139 contribute to the NADP(+) site; these read TGDF, SR, and MHREH. W140 and D148 together coordinate FAD. Residue R171 coordinates NADP(+). Helical transmembrane passes span 202–224 and 236–256; these read FPFYLSSVLCVFFFVYCAIREVI and YRLAISIPNRVFPITALILLA. Residue Y217 participates in Fe(3+) binding. The Ferric oxidoreductase domain occupies 247–395; that stretch reads FPITALILLA…LGYLTLVLCT (149 aa). FAD is bound by residues Q269 and R290. The next 2 membrane-spanning stretches (helical) occupy residues 293–313 and 342–362; these read LGLVALGFAFLHVIYTLVIPI and AWINDSYLALGILGFFLFLLL. H304 serves as a coordination point for heme b. Position 307 (Y307) interacts with Fe(3+). FAD-binding residues include S366 and Q383. 2 helical membrane passes run 381-401 and 419-439; these read FVQSKLGYLTLVLCTAHTLVY and AYILALVIPCAVLVLKCILIM. H397 contacts heme b.

This sequence belongs to the STEAP family. Homotrimer. Interacts with PTK2/FAK1; the interaction may regulate PTK2 phosphorylation. Requires FAD as cofactor. The cofactor is heme b. As to expression, expressed in white and brown adipose tissues cells, as well as in muscle and liver cells. Detected in joints and spleens of arthritic mice.

It is found in the cell membrane. The protein localises to the golgi apparatus membrane. Its subcellular location is the early endosome membrane. It catalyses the reaction 2 Fe(2+) + NADP(+) + H(+) = 2 Fe(3+) + NADPH. It carries out the reaction 2 Cu(+) + NADP(+) + H(+) = 2 Cu(2+) + NADPH. Functionally, integral membrane protein that functions as a NADPH-dependent ferric-chelate reductase, using NADPH from one side of the membrane to reduce a Fe(3+) chelate that is bound on the other side of the membrane. Mediates sequential transmembrane electron transfer from NADPH to FAD and onto heme, and finally to the Fe(3+) chelate. Can also reduce Cu(2+) to Cu(1+). Plays a role in systemic metabolic homeostasis, integrating inflammatory and metabolic responses. Associated with obesity and insulin-resistance. Involved in inflammatory arthritis, through the regulation of inflammatory cytokines. Inhibits anchorage-independent cell proliferation. This chain is Metalloreductase STEAP4 (Steap4), found in Mus musculus (Mouse).